Consider the following 485-residue polypeptide: Bifunctional protein HldE (485 aa).

The segment at 1-326 (MDFSSTRVLC…AELDESAISN (326 aa)) is ribokinase. 195–198 (NVKE) is an ATP binding site. Asp271 is an active-site residue. The tract at residues 354-485 (FTNGCFDILH…GIVKKISTLT (132 aa)) is cytidylyltransferase.

In the N-terminal section; belongs to the carbohydrate kinase PfkB family. It in the C-terminal section; belongs to the cytidylyltransferase family. As to quaternary structure, homodimer.

It carries out the reaction D-glycero-beta-D-manno-heptose 7-phosphate + ATP = D-glycero-beta-D-manno-heptose 1,7-bisphosphate + ADP + H(+). The catalysed reaction is D-glycero-beta-D-manno-heptose 1-phosphate + ATP + H(+) = ADP-D-glycero-beta-D-manno-heptose + diphosphate. Its pathway is nucleotide-sugar biosynthesis; ADP-L-glycero-beta-D-manno-heptose biosynthesis; ADP-L-glycero-beta-D-manno-heptose from D-glycero-beta-D-manno-heptose 7-phosphate: step 1/4. It participates in nucleotide-sugar biosynthesis; ADP-L-glycero-beta-D-manno-heptose biosynthesis; ADP-L-glycero-beta-D-manno-heptose from D-glycero-beta-D-manno-heptose 7-phosphate: step 3/4. In terms of biological role, catalyzes the phosphorylation of D-glycero-D-manno-heptose 7-phosphate at the C-1 position to selectively form D-glycero-beta-D-manno-heptose-1,7-bisphosphate. Its function is as follows. Catalyzes the ADP transfer from ATP to D-glycero-beta-D-manno-heptose 1-phosphate, yielding ADP-D-glycero-beta-D-manno-heptose. This chain is Bifunctional protein HldE, found in Granulibacter bethesdensis (strain ATCC BAA-1260 / CGDNIH1).